The chain runs to 123 residues: Ribonuclease P protein component (123 aa).

The protein belongs to the RnpA family. Consists of a catalytic RNA component (M1 or rnpB) and a protein subunit.

The enzyme catalyses Endonucleolytic cleavage of RNA, removing 5'-extranucleotides from tRNA precursor.. Functionally, RNaseP catalyzes the removal of the 5'-leader sequence from pre-tRNA to produce the mature 5'-terminus. It can also cleave other RNA substrates such as 4.5S RNA. The protein component plays an auxiliary but essential role in vivo by binding to the 5'-leader sequence and broadening the substrate specificity of the ribozyme. In Streptomyces bikiniensis, this protein is Ribonuclease P protein component.